The primary structure comprises 737 residues: Alpha-adducin (737 aa).

Position 1 is an N-acetylmethionine (M1). Residues 1-21 (MNGDSRAAVVTSPPPTTAPHK) are disordered. Residue S12 is modified to Phosphoserine. S59 carries the post-translational modification Phosphoserine; by PKA. S64 carries the phosphoserine modification. Residue T331 is modified to Phosphothreonine. Residues S334, S353, S355, S358, and S366 each carry the phosphoserine modification. Residue S408 is modified to Phosphoserine; by PKA. Disordered stretches follow at residues 421–486 (FASD…SAVP) and 576–737 (RREV…KSDS). S427 carries the phosphoserine modification. T429 is modified (phosphothreonine). At S431 the chain carries Phosphoserine. Position 436 is a phosphoserine; by PKA (S436). T445 is modified (phosphothreonine; by ROCK2). Phosphoserine is present on residues S464 and S465. T480 bears the Phosphothreonine; by ROCK2 mark. S481 bears the Phosphoserine; by PKA mark. Positions 576–601 (RREVERKQKGSEENLDEAREQKEKSP) are enriched in basic and acidic residues. Phosphoserine is present on residues S586, S600, and S613. Residues 602–614 (PDQPAVPHPPPST) are compositionally biased toward pro residues. The residue at position 614 (T614) is a Phosphothreonine. A phosphoserine mark is found at S678, S707, S710, and S714. Positions 687–714 (PVAEEAAPSAVEEGAAADPGSDGSPGKS) are enriched in low complexity. Basic residues predominate over residues 715-737 (PSKKKKKFRTPSFLKKSKKKSDS). Phosphoserine; by PKC is present on S716. An interaction with calmodulin region spans residues 717–734 (KKKKKFRTPSFLKKSKKK). S726 carries the phosphoserine; by PKA and PKC modification.

The protein belongs to the aldolase class II family. Adducin subfamily. In terms of assembly, heterodimer of an alpha and a beta subunit or an alpha and a gamma subunit. Expressed in all tissues. Found in much higher levels in reticulocytes than the beta subunit.

The protein localises to the cytoplasm. It localises to the cytoskeleton. The protein resides in the cell membrane. Functionally, membrane-cytoskeleton-associated protein that promotes the assembly of the spectrin-actin network. Binds to calmodulin. In Homo sapiens (Human), this protein is Alpha-adducin (ADD1).